The sequence spans 179 residues: uncharacterized protein (179 aa).

Basic and acidic residues predominate over residues 1-14; it reads MTKKVKLDQDEINN. Disordered stretches follow at residues 1 to 90 and 121 to 147; these read MTKK…NNFC and HKKS…DKKV. Composition is skewed to low complexity over residues 15–90 and 126–137; these read KNKN…NNFC and RSQSQSSLNSFD. Over residues 138-147 the composition is skewed to basic and acidic residues; that stretch reads QDNKSKDKKV.

This is an uncharacterized protein from Dictyostelium discoideum (Social amoeba).